Consider the following 307-residue polypeptide: UPF0282 protein PH1002 (307 aa).

Belongs to the UPF0282 family.

This chain is UPF0282 protein PH1002, found in Pyrococcus horikoshii (strain ATCC 700860 / DSM 12428 / JCM 9974 / NBRC 100139 / OT-3).